We begin with the raw amino-acid sequence, 416 residues long: Gamma-glutamyl phosphate reductase (416 aa).

It belongs to the gamma-glutamyl phosphate reductase family.

It is found in the cytoplasm. It carries out the reaction L-glutamate 5-semialdehyde + phosphate + NADP(+) = L-glutamyl 5-phosphate + NADPH + H(+). The protein operates within amino-acid biosynthesis; L-proline biosynthesis; L-glutamate 5-semialdehyde from L-glutamate: step 2/2. Its function is as follows. Catalyzes the NADPH-dependent reduction of L-glutamate 5-phosphate into L-glutamate 5-semialdehyde and phosphate. The product spontaneously undergoes cyclization to form 1-pyrroline-5-carboxylate. This Streptococcus pyogenes serotype M4 (strain MGAS10750) protein is Gamma-glutamyl phosphate reductase.